A 243-amino-acid chain; its full sequence is Small ribosomal subunit protein uS3 (243 aa).

Residues 39–110 (IRGFIQKKYA…QVRINVVEIE (72 aa)) enclose the KH type-2 domain. Residues 215–243 (DQPLPVGASPRRKGSRRPQQFEDRSNDGK) are disordered. Residues 233-243 (QQFEDRSNDGK) show a composition bias toward basic and acidic residues.

This sequence belongs to the universal ribosomal protein uS3 family. In terms of assembly, part of the 30S ribosomal subunit. Forms a tight complex with proteins S10 and S14.

In terms of biological role, binds the lower part of the 30S subunit head. Binds mRNA in the 70S ribosome, positioning it for translation. The sequence is that of Small ribosomal subunit protein uS3 from Prochlorococcus marinus (strain MIT 9211).